We begin with the raw amino-acid sequence, 373 residues long: RNA 3'-terminal phosphate cyclase-like protein (373 aa).

It belongs to the RNA 3'-terminal cyclase family. Type 2 subfamily. Part of the small subunit (SSU) processome, composed of more than 70 proteins and the RNA chaperone small nucleolar RNA (snoRNA) U3. Interacts with BMS1.

It localises to the nucleus. The protein resides in the nucleolus. Its function is as follows. As part of the small subunit (SSU) processome, it plays a role in 40S-ribosomal-subunit biogenesis in the early pre-rRNA processing steps at sites A0, A1 and A2 that are required for proper maturation of the 18S RNA. Activates BMS1 by promoting GDP/GTP exchange. Does not have cyclase activity. In Bos taurus (Bovine), this protein is RNA 3'-terminal phosphate cyclase-like protein (RCL1).